A 179-amino-acid chain; its full sequence is MAKLHDYYKDEVVKKLMTEFSYNSVMQVPRVEKITLNMGVGEAIADKKLLDNAAADLAAISGQKPFITKARKSVAGFKIRQGYPIGCKVTLRGERMWEFFERLISIAVPRIRDFRGLSAKSFDGRGNYSMGVREQIIFPEIDYDKVDRVRGMDITITTTAKSDDEGRALLAAFNFPFRK.

It belongs to the universal ribosomal protein uL5 family. In terms of assembly, part of the 50S ribosomal subunit; part of the 5S rRNA/L5/L18/L25 subcomplex. Contacts the 5S rRNA and the P site tRNA. Forms a bridge to the 30S subunit in the 70S ribosome.

This is one of the proteins that bind and probably mediate the attachment of the 5S RNA into the large ribosomal subunit, where it forms part of the central protuberance. In the 70S ribosome it contacts protein S13 of the 30S subunit (bridge B1b), connecting the 2 subunits; this bridge is implicated in subunit movement. Contacts the P site tRNA; the 5S rRNA and some of its associated proteins might help stabilize positioning of ribosome-bound tRNAs. The polypeptide is Large ribosomal subunit protein uL5 (Erwinia tasmaniensis (strain DSM 17950 / CFBP 7177 / CIP 109463 / NCPPB 4357 / Et1/99)).